The following is a 318-amino-acid chain: NADH-ubiquinone oxidoreductase chain 1 (318 aa).

8 consecutive transmembrane segments (helical) span residues 2-22 (PMTNLLLLIVPILIAMAFLML), 68-88 (ITLYITAPTLALTIALLLWTP), 100-120 (LGLLFILATSSLAVYSILWSG), 146-166 (LAIILLSTLLMSGSFNLSTLV), 171-191 (HLWLILPTWPLAMMWFISTLA), 213-233 (IEYAAGPFALFFMAEYMNIIM), 253-273 (ELYTTYFVTKALLLTSLFLWI), and 285-305 (LMHLLWKNFLPLTLASLMWYI).

This sequence belongs to the complex I subunit 1 family. As to quaternary structure, core subunit of respiratory chain NADH dehydrogenase (Complex I) which is composed of 45 different subunits.

The protein localises to the mitochondrion inner membrane. The catalysed reaction is a ubiquinone + NADH + 5 H(+)(in) = a ubiquinol + NAD(+) + 4 H(+)(out). In terms of biological role, core subunit of the mitochondrial membrane respiratory chain NADH dehydrogenase (Complex I) which catalyzes electron transfer from NADH through the respiratory chain, using ubiquinone as an electron acceptor. Essential for the catalytic activity and assembly of complex I. The chain is NADH-ubiquinone oxidoreductase chain 1 (MT-ND1) from Pan troglodytes (Chimpanzee).